Consider the following 198-residue polypeptide: Inosine triphosphate pyrophosphatase (198 aa).

Residue alanine 2 is modified to N-acetylalanine. Residue 14–19 (TGNAKK) coordinates ITP. Glutamate 44 contributes to the Mg(2+) binding site. ITP is bound by residues lysine 56, 72–73 (DT), and lysine 89. Serine 146 is modified (phosphoserine). Residues 149-152 (FGWD), lysine 172, and 177-178 (HR) contribute to the ITP site.

Belongs to the HAM1 NTPase family. As to quaternary structure, homodimer. Mg(2+) is required as a cofactor. Requires Mn(2+) as cofactor.

The protein resides in the cytoplasm. The catalysed reaction is ITP + H2O = IMP + diphosphate + H(+). It catalyses the reaction dITP + H2O = dIMP + diphosphate + H(+). It carries out the reaction XTP + H2O = XMP + diphosphate + H(+). The enzyme catalyses N(6)-hydroxy-dATP + H2O = N(6)-hydroxy-dAMP + diphosphate + H(+). Functionally, pyrophosphatase that hydrolyzes the non-canonical purine nucleotides inosine triphosphate (ITP), deoxyinosine triphosphate (dITP) as well as 2'-deoxy-N-6-hydroxylaminopurine triphosphate (dHAPTP) and xanthosine 5'-triphosphate (XTP) to their respective monophosphate derivatives. The enzyme does not distinguish between the deoxy- and ribose forms. Probably excludes non-canonical purines from RNA and DNA precursor pools, thus preventing their incorporation into RNA and DNA and avoiding chromosomal lesions. This Mus musculus (Mouse) protein is Inosine triphosphate pyrophosphatase (Itpa).